A 574-amino-acid chain; its full sequence is Septation ring formation regulator EzrA (574 aa).

The Extracellular segment spans residues 1–7; that stretch reads MSSGIIL. Residues 8-26 form a helical membrane-spanning segment; the sequence is LLVAIVLLVIIAYVVGVVI. Topologically, residues 27–574 are cytoplasmic; the sequence is RKRNDTLIAN…YEKTQERIRF (548 aa). Coiled-coil stretches lie at residues 104-141, 275-343, and 473-525; these read VRAK…EEKN, LVSL…SAKY, and DIEA…VQKS.

Belongs to the EzrA family.

It is found in the cell membrane. In terms of biological role, negative regulator of FtsZ ring formation; modulates the frequency and position of FtsZ ring formation. Inhibits FtsZ ring formation at polar sites. Interacts either with FtsZ or with one of its binding partners to promote depolymerization. The chain is Septation ring formation regulator EzrA from Streptococcus agalactiae serotype III (strain NEM316).